The sequence spans 337 residues: S-adenosylmethionine:tRNA ribosyltransferase-isomerase (337 aa).

This sequence belongs to the QueA family. As to quaternary structure, monomer.

Its subcellular location is the cytoplasm. It catalyses the reaction 7-aminomethyl-7-carbaguanosine(34) in tRNA + S-adenosyl-L-methionine = epoxyqueuosine(34) in tRNA + adenine + L-methionine + 2 H(+). Its pathway is tRNA modification; tRNA-queuosine biosynthesis. Transfers and isomerizes the ribose moiety from AdoMet to the 7-aminomethyl group of 7-deazaguanine (preQ1-tRNA) to give epoxyqueuosine (oQ-tRNA). This Legionella pneumophila (strain Paris) protein is S-adenosylmethionine:tRNA ribosyltransferase-isomerase.